Reading from the N-terminus, the 228-residue chain is Vesicle transport protein SEC20 (228 aa).

Topologically, residues 1–199 (MAAPQDVHVR…LITKYNRREL (199 aa)) are cytoplasmic. The stretch at 37–90 (LSELTELNTKVKEKFQQLKHRIQELEQSAKEQDKESEKQLLLQEVENHKKQMLS) forms a coiled coil. The chain crosses the membrane as a helical; Anchor for type IV membrane protein span at residues 200-220 (TDKLLIFLALALFLATVLYIV). Residues 221 to 228 (KKRLFPFL) lie on the Lumenal side of the membrane.

Belongs to the SEC20 family. Component of a SNARE complex consisting of STX18, USE1L, BNIP1/SEC20L and SEC22B. Interacts directly with STX18, RINT1/TIP20L and NAPA. Interacts with ZW10 through RINT1. Interacts with BCL2. Interacts with RNF186. Interacts with RNF185. Interacts with SQSTM1; increased by 'Lys-63'-linked polyubiquitination of BNIP1. Polyubiquitinated. 'Lys-63'-linked polyubiquitination by RNF185 increases the interaction with the autophagy receptor SQSTM1. Undergoes 'Lys-29'- and 'Lys-63'-linked polyubiquitination by RNF186 that may regulate BNIP1 localization to the mitochondrion.

It localises to the endoplasmic reticulum membrane. The protein localises to the mitochondrion membrane. In terms of biological role, as part of a SNARE complex may be involved in endoplasmic reticulum membranes fusion and be required for the maintenance of endoplasmic reticulum organization. Also plays a role in apoptosis. It is for instance required for endoplasmic reticulum stress-induced apoptosis. As a substrate of RNF185 interacting with SQSTM1, might also be involved in mitochondrial autophagy. This chain is Vesicle transport protein SEC20, found in Rattus norvegicus (Rat).